An 83-amino-acid chain; its full sequence is uncharacterized protein (83 aa).

This is an uncharacterized protein from Archaeoglobus fulgidus (strain ATCC 49558 / DSM 4304 / JCM 9628 / NBRC 100126 / VC-16).